A 295-amino-acid chain; its full sequence is MSKDIATPGRTTEILKKYGFLFKKSLGQNFLIDSNILTRITDTAEITKETNVIEIGPGIGALTEQLAKTANEVVAFEIDQRLLPILDDTLSAYSNVQVVHGDVLKADVEEVVAEQFAKPELPLKIVANLPYYVTTPIILKLLHDNIPADSMTFMLQKEVADRISAVPSTKSYGSLTIAIQFYMEAELAFIVPKTVFMPQPNVDSAVIHLKRRKEPLAEVNDEEFFFEVTRASFAQRRKTLWNNLASKFPALKPRKDELVEGLNAIGIDLIRRGETLDIPEFAKLSNFLGDFLKEK.

6 residues coordinate S-adenosyl-L-methionine: N29, L31, G56, E77, D102, and N128.

It belongs to the class I-like SAM-binding methyltransferase superfamily. rRNA adenine N(6)-methyltransferase family. RsmA subfamily.

The protein resides in the cytoplasm. It catalyses the reaction adenosine(1518)/adenosine(1519) in 16S rRNA + 4 S-adenosyl-L-methionine = N(6)-dimethyladenosine(1518)/N(6)-dimethyladenosine(1519) in 16S rRNA + 4 S-adenosyl-L-homocysteine + 4 H(+). Specifically dimethylates two adjacent adenosines (A1518 and A1519) in the loop of a conserved hairpin near the 3'-end of 16S rRNA in the 30S particle. May play a critical role in biogenesis of 30S subunits. The polypeptide is Ribosomal RNA small subunit methyltransferase A (Listeria monocytogenes serotype 4a (strain HCC23)).